The primary structure comprises 360 residues: Peptide chain release factor 1 (360 aa).

Residue glutamine 235 is modified to N5-methylglutamine. Positions 284–313 (AKRQQAEASTRRNLLGSGDRSDRNRTYNFP) are disordered.

This sequence belongs to the prokaryotic/mitochondrial release factor family. Methylated by PrmC. Methylation increases the termination efficiency of RF1.

The protein localises to the cytoplasm. In terms of biological role, peptide chain release factor 1 directs the termination of translation in response to the peptide chain termination codons UAG and UAA. The sequence is that of Peptide chain release factor 1 from Escherichia coli O127:H6 (strain E2348/69 / EPEC).